Here is a 963-residue protein sequence, read N- to C-terminus: Ubiquitin carboxyl-terminal hydrolase 11 (963 aa).

Residues 64–93 (VTEDREPQHEELPGLDSQWRQIENGESGRE) form a disordered region. Over residues 65 to 75 (TEDREPQHEEL) the composition is skewed to basic and acidic residues. The DUSP domain occupies 76-184 (PGLDSQWRQI…GQPPIERKVI (109 aa)). An N6-acetyllysine modification is found at Lys-245. In terms of domain architecture, USP spans 309–930 (CGLTNLGNTC…AAYVLFYQRQ (622 aa)). Cys-318 serves as the catalytic Nucleophile. 2 disordered regions span residues 644-691 (TKPN…SGVT) and 716-735 (LFTL…TSPE). At Ser-648 the chain carries Phosphoserine. Residues 649–665 (DDEDDGDEKEDDEEDKD) are compositionally biased toward acidic residues. The span at 717 to 731 (FTLQTVNSNGTSDRT) shows a compositional bias: polar residues. Position 733 is a phosphoserine (Ser-733). His-888 acts as the Proton acceptor in catalysis. Residues 938-957 (SPAGSSGAPASPACSSPPSS) are compositionally biased toward low complexity. The interval 938-963 (SPAGSSGAPASPACSSPPSSEFMDVN) is disordered. Phosphoserine is present on Ser-948.

This sequence belongs to the peptidase C19 family. In terms of assembly, monomer. Associated component of the Polycomb group (PcG) multiprotein PRC1-like complex. Interacts with RANBP9/RANBPM. Interacts with BRCA2. Interacts with CHUK/IKKA. Interacts with NFKBIA. Interacts with SPRY3, RAE1, MYCBP2/PAM, and KCTD6. As to quaternary structure, (Microbial infection) Interacts with papilloma virus protein 16E7.

It is found in the nucleus. It localises to the cytoplasm. Its subcellular location is the chromosome. It carries out the reaction Thiol-dependent hydrolysis of ester, thioester, amide, peptide and isopeptide bonds formed by the C-terminal Gly of ubiquitin (a 76-residue protein attached to proteins as an intracellular targeting signal).. Protease that can remove conjugated ubiquitin from target proteins and polyubiquitin chains. Inhibits the degradation of target proteins by the proteasome. Cleaves preferentially 'Lys-6' and 'Lys-63'-linked ubiquitin chains. Has lower activity with 'Lys-11' and 'Lys-33'-linked ubiquitin chains, and extremely low activity with 'Lys-27', 'Lys-29' and 'Lys-48'-linked ubiquitin chains (in vitro). Plays a role in the regulation of pathways leading to NF-kappa-B activation. Plays a role in the regulation of DNA repair after double-stranded DNA breaks. Acts as a chromatin regulator via its association with the Polycomb group (PcG) multiprotein PRC1-like complex; may act by deubiquitinating components of the PRC1-like complex. Promotes cell proliferation by deubiquitinating phosphorylated E2F1. The polypeptide is Ubiquitin carboxyl-terminal hydrolase 11 (USP11) (Homo sapiens (Human)).